The primary structure comprises 108 residues: Parvalbumin beta 2 (108 aa).

Ala-1 is modified (N-acetylalanine). EF-hand domains follow at residues 38 to 73 (KSAA…FSAG) and 77 to 108 (LTDA…MVKG). Ca(2+) contacts are provided by Asp-51, Asp-53, Ser-55, Phe-57, Glu-59, Glu-62, Asp-90, Asp-92, Asp-94, Lys-96, and Glu-101.

Belongs to the parvalbumin family.

In muscle, parvalbumin is thought to be involved in relaxation after contraction. It binds two calcium ions. This is Parvalbumin beta 2 from Merluccius bilinearis (Silver hake).